The sequence spans 354 residues: MNVVTPNGGDSVAARSWPGLLNPLLRGEDLSAEETAWAMDRIMSGEATDAQIAGFAVALRAKGETVDEVTGLVRAMYAHANTIEVPGRTVDIVGTGGDLAKTVNISTMSAIVIAGTGAKVVKHGNRAASSASGSSDVLEKLGVNLELTPRRVVEVAEAAGITFCFAVKFHPALRYAAKARKELGAQTTFNILGPLTNPAQVRSQAVGVADARMAPIVAGVLADRGNSALVFRGDDGLDELTTTATSRVWVVRDGVVREEPFDPRDVGLPIVPVEALRGADASYNADVARRLLDGEAGAVREAVLLNSAAALVALDPGTGTLTEQLAAKILVAAEAIDSGAAKQALERWIAASNA.

5-phospho-alpha-D-ribose 1-diphosphate is bound by residues Gly94, 97-98 (GD), Thr102, 104-107 (NIST), 122-130 (KHGNRAASS), and Ser134. Gly94 provides a ligand contact to anthranilate. Mg(2+) is bound at residue Ser106. An anthranilate-binding site is contributed by Asn125. Residue Arg180 coordinates anthranilate. Residues Asp238 and Glu239 each contribute to the Mg(2+) site.

Belongs to the anthranilate phosphoribosyltransferase family. As to quaternary structure, homodimer. Mg(2+) is required as a cofactor.

The catalysed reaction is N-(5-phospho-beta-D-ribosyl)anthranilate + diphosphate = 5-phospho-alpha-D-ribose 1-diphosphate + anthranilate. It functions in the pathway amino-acid biosynthesis; L-tryptophan biosynthesis; L-tryptophan from chorismate: step 2/5. In terms of biological role, catalyzes the transfer of the phosphoribosyl group of 5-phosphorylribose-1-pyrophosphate (PRPP) to anthranilate to yield N-(5'-phosphoribosyl)-anthranilate (PRA). In Streptomyces griseus subsp. griseus (strain JCM 4626 / CBS 651.72 / NBRC 13350 / KCC S-0626 / ISP 5235), this protein is Anthranilate phosphoribosyltransferase.